The chain runs to 559 residues: Potassium-transporting ATPase potassium-binding subunit (559 aa).

Transmembrane regions (helical) follow at residues glycine 5–serine 25, leucine 27–tryptophan 47, leucine 63–tryptophan 83, glycine 132–isoleucine 152, leucine 170–isoleucine 190, leucine 253–alanine 273, leucine 283–valine 303, phenylalanine 327–valine 347, alanine 356–valine 376, glycine 379–glycine 399, methionine 416–methionine 436, leucine 484–alanine 504, and glycine 524–isoleucine 544.

It belongs to the KdpA family. In terms of assembly, the system is composed of three essential subunits: KdpA, KdpB and KdpC.

The protein localises to the cell inner membrane. In terms of biological role, part of the high-affinity ATP-driven potassium transport (or Kdp) system, which catalyzes the hydrolysis of ATP coupled with the electrogenic transport of potassium into the cytoplasm. This subunit binds the periplasmic potassium ions and delivers the ions to the membrane domain of KdpB through an intramembrane tunnel. This chain is Potassium-transporting ATPase potassium-binding subunit, found in Salmonella heidelberg (strain SL476).